We begin with the raw amino-acid sequence, 530 residues long: Autoinducer-2 kinase (530 aa).

It belongs to the FGGY kinase family.

The protein resides in the cytoplasm. The enzyme catalyses (S)-4,5-dihydroxypentane-2,3-dione + ATP = (2S)-2-hydroxy-3,4-dioxopentyl phosphate + ADP + H(+). Functionally, catalyzes the phosphorylation of autoinducer-2 (AI-2) to phospho-AI-2, which subsequently inactivates the transcriptional regulator LsrR and leads to the transcription of the lsr operon. Phosphorylates the ring-open form of (S)-4,5-dihydroxypentane-2,3-dione (DPD), which is the precursor to all AI-2 signaling molecules, at the C5 position. This chain is Autoinducer-2 kinase, found in Photorhabdus laumondii subsp. laumondii (strain DSM 15139 / CIP 105565 / TT01) (Photorhabdus luminescens subsp. laumondii).